The chain runs to 717 residues: Asp/Glu-specific dipeptidyl-peptidase (717 aa).

The N-terminal stretch at 1-21 (MNKRFFPTLLLAFVCSTLAYA) is a signal peptide. Catalysis depends on charge relay system residues His-85, Asp-226, and Ser-652.

It belongs to the peptidase S46 family.

It is found in the secreted. The protein localises to the cell surface. Enzyme activity is completely blocked by diisopropyl-fluorophosphates, moderately by phenylmethylsulfonyl fluoride (PMSF) and 4-(2-methyl)benzenesulfonyl fluoride, and slightly by pepstatin in vitro. In terms of biological role, catalyzes the removal of dipeptides from the N-terminus of oligopeptides. Shows a strict specificity for acidic residues (Asp or Glu) in the P1 position, and has a hydrophobic residue preference at the P2 position. Is likely involved in amino acid metabolism and bacterial growth/survival of asaccharolytic P.endodontalis, that utilizes amino acids from extracellular proteinaceous nutrients as energy and carbon sources. This is Asp/Glu-specific dipeptidyl-peptidase (dpp11) from Porphyromonas endodontalis (strain ATCC 35406 / DSM 24491 / JCM 8526 / CCUG 16442 / BCRC 14492 / NCTC 13058 / HG 370) (Bacteroides endodontalis).